The primary structure comprises 39 residues: MIEPLLCGIVLGLVPITLLGLFVSAWNQYRRGSGLLDMD.

The helical transmembrane segment at 5-25 threads the bilayer; the sequence is LLCGIVLGLVPITLLGLFVSA.

Belongs to the PetG family. In terms of assembly, the 4 large subunits of the cytochrome b6-f complex are cytochrome b6, subunit IV (17 kDa polypeptide, PetD), cytochrome f and the Rieske protein, while the 4 small subunits are PetG, PetL, PetM and PetN. The complex functions as a dimer.

The protein localises to the cellular thylakoid membrane. In terms of biological role, component of the cytochrome b6-f complex, which mediates electron transfer between photosystem II (PSII) and photosystem I (PSI), cyclic electron flow around PSI, and state transitions. PetG is required for either the stability or assembly of the cytochrome b6-f complex. This Prochlorococcus marinus (strain MIT 9515) protein is Cytochrome b6-f complex subunit 5.